The primary structure comprises 61 residues: Small ribosomal subunit protein uS14 (61 aa).

Positions 24, 27, 40, and 43 each coordinate Zn(2+).

The protein belongs to the universal ribosomal protein uS14 family. Zinc-binding uS14 subfamily. Part of the 30S ribosomal subunit. Contacts proteins S3 and S10. Requires Zn(2+) as cofactor.

In terms of biological role, binds 16S rRNA, required for the assembly of 30S particles and may also be responsible for determining the conformation of the 16S rRNA at the A site. The protein is Small ribosomal subunit protein uS14 of Fervidobacterium nodosum (strain ATCC 35602 / DSM 5306 / Rt17-B1).